Reading from the N-terminus, the 264-residue chain is MVLYFIGLGLYDEKDITLKGLETARRCDKVFAEFYTSLLAGTTLEKIEELIGKPIVRLSREDVELNFERIVLPEAKDKDVAFLTAGDPMVATTHSDLRIRAKKAGVKSYVIHAPSIYSAVAITGLQIYKFGKSATVAYPEKNWFPTSHYDVIRDNKERGLHTLLFLDIKADQNRYMTANEAMEILLKVEEMKGEGVFTPETLVVVLARAGSLEPTLRAGYVRELINEDFGRQPHVLIVPGRLHIVEAEYLVEFAGAPEKILEEV.

Residues leucine 10, aspartate 87, valine 90, 115-116 (SI), leucine 166, alanine 209, and histidine 234 each bind S-adenosyl-L-methionine.

The protein belongs to the diphthine synthase family. In terms of assembly, homodimer.

The catalysed reaction is 2-[(3S)-amino-3-carboxypropyl]-L-histidyl-[translation elongation factor 2] + 3 S-adenosyl-L-methionine = diphthine-[translation elongation factor 2] + 3 S-adenosyl-L-homocysteine + 3 H(+). Its pathway is protein modification; peptidyl-diphthamide biosynthesis. In terms of biological role, S-adenosyl-L-methionine-dependent methyltransferase that catalyzes the trimethylation of the amino group of the modified target histidine residue in translation elongation factor 2 (EF-2), to form an intermediate called diphthine. The three successive methylation reactions represent the second step of diphthamide biosynthesis. This chain is Diphthine synthase, found in Thermococcus kodakarensis (strain ATCC BAA-918 / JCM 12380 / KOD1) (Pyrococcus kodakaraensis (strain KOD1)).